A 2253-amino-acid chain; its full sequence is Protein Ycf2 (2253 aa).

Residue 1600 to 1607 participates in ATP binding; it reads GFIGTGRS.

The protein belongs to the Ycf2 family.

The protein resides in the plastid. It localises to the chloroplast stroma. Its function is as follows. Probable ATPase of unknown function. Its presence in a non-photosynthetic plant (Epifagus virginiana) and experiments in tobacco indicate that it has an essential function which is probably not related to photosynthesis. This Nymphaea alba (White water-lily) protein is Protein Ycf2.